Reading from the N-terminus, the 102-residue chain is Small ubiquitin-related modifier 1-A (102 aa).

The disordered stretch occupies residues 1–20; sequence MSDQEAKPSSEDLGDKKDGG. The Ubiquitin-like domain maps to 21–98; sequence DYIKLKVIGQ…IEVYQEQTGG (78 aa). Gly98 participates in a covalent cross-link: Glycyl lysine isopeptide (Gly-Lys) (interchain with K-? in acceptor proteins). A propeptide spanning residues 99–102 is cleaved from the precursor; it reads HSTF.

Belongs to the ubiquitin family. SUMO subfamily. Interacts with sae2, ube2i, ranbp2, pias1 and pias2. Covalently attached to a number of proteins including rangap1 and ranbp2. Interacts with sox9 and sox10. Post-translationally, cleavage of precursor form by a sentrin-specific protease is necessary for function.

The protein localises to the nucleus membrane. It localises to the nucleus speckle. It is found in the cytoplasm. Its subcellular location is the nucleus. The protein resides in the PML body. The protein localises to the cell membrane. Ubiquitin-like protein that can be covalently attached to proteins as a monomer or a lysine-linked polymer. Covalent attachment via an isopeptide bond to its substrates requires prior activation by the E1 complex sae1-sae2 and linkage to the E2 enzyme ube2i. This post-translational modification on lysine residues of proteins plays a crucial role in a number of cellular processes such as nuclear transport, DNA replication and repair, mitosis and signal transduction. Polymeric sumo1 chains are also susceptible to polyubiquitination which functions as a signal for proteasomal degradation of modified proteins. This chain is Small ubiquitin-related modifier 1-A (sumo1-a), found in Xenopus laevis (African clawed frog).